Reading from the N-terminus, the 103-residue chain is Co-chaperonin GroES (103 aa).

Residues 31 to 67 form a disordered region; the sequence is GGILLPDTAKEKPQVGEVAQVGPGKRNEDGSRQSPEV.

The protein belongs to the GroES chaperonin family. As to quaternary structure, heptamer of 7 subunits arranged in a ring. Interacts with the chaperonin GroEL.

The protein resides in the cytoplasm. In terms of biological role, together with the chaperonin GroEL, plays an essential role in assisting protein folding. The GroEL-GroES system forms a nano-cage that allows encapsulation of the non-native substrate proteins and provides a physical environment optimized to promote and accelerate protein folding. GroES binds to the apical surface of the GroEL ring, thereby capping the opening of the GroEL channel. The polypeptide is Co-chaperonin GroES (Prochlorococcus marinus (strain NATL2A)).